The sequence spans 382 residues: Dual-specificity RNA methyltransferase RlmN (382 aa).

Catalysis depends on glutamate 96, which acts as the Proton acceptor. Residues 102–342 (QGKRGTLCVS…VRTTRGEDID (241 aa)) form the Radical SAM core domain. A disulfide bridge connects residues cysteine 109 and cysteine 345. Cysteine 116, cysteine 120, and cysteine 123 together coordinate [4Fe-4S] cluster. S-adenosyl-L-methionine contacts are provided by residues 170-171 (GE), serine 202, 224-226 (SLH), and asparagine 302. Cysteine 345 serves as the catalytic S-methylcysteine intermediate.

Belongs to the radical SAM superfamily. RlmN family. It depends on [4Fe-4S] cluster as a cofactor.

It localises to the cytoplasm. It catalyses the reaction adenosine(2503) in 23S rRNA + 2 reduced [2Fe-2S]-[ferredoxin] + 2 S-adenosyl-L-methionine = 2-methyladenosine(2503) in 23S rRNA + 5'-deoxyadenosine + L-methionine + 2 oxidized [2Fe-2S]-[ferredoxin] + S-adenosyl-L-homocysteine. It carries out the reaction adenosine(37) in tRNA + 2 reduced [2Fe-2S]-[ferredoxin] + 2 S-adenosyl-L-methionine = 2-methyladenosine(37) in tRNA + 5'-deoxyadenosine + L-methionine + 2 oxidized [2Fe-2S]-[ferredoxin] + S-adenosyl-L-homocysteine. Functionally, specifically methylates position 2 of adenine 2503 in 23S rRNA and position 2 of adenine 37 in tRNAs. m2A2503 modification seems to play a crucial role in the proofreading step occurring at the peptidyl transferase center and thus would serve to optimize ribosomal fidelity. The polypeptide is Dual-specificity RNA methyltransferase RlmN (Pseudomonas fluorescens (strain ATCC BAA-477 / NRRL B-23932 / Pf-5)).